Here is a 144-residue protein sequence, read N- to C-terminus: Short-chain diamines transporter (144 aa).

4 helical membrane passes run 9–29 (IHAI…LSFI), 35–55 (EVTG…NMIF), 76–96 (ILHA…MIAY), and 103–123 (IDAF…TFIF).

This sequence belongs to the proteobacterial antimicrobial compound efflux (PACE) (TC 2.A.117) family. In terms of assembly, exists in a monomer-homodimer equilibrium. The dimer is probably the functional form of the protein, and the assembly of the dimer is mediated by binding of chlorhexidine and promoted by high pH conditions.

The protein resides in the cell inner membrane. With respect to regulation, protonation/deprotonation of Glu-15 may play an important role in transporter function. Cadaverin transport is inhibited in the presence of CCCP. Functionally, mediates the efflux of short-chain diamines when energized by an electrochemical gradient. Recognizes specifically the short-chain diamines cadaverine and putrescine as substrates, and promotes the active transport of these substrates in exchange for a cation. Protons are probably the primary source of energy for transport, however it was not possible to conclude with complete certainty that protons, rather than alternative cations such as Na(+) ions, are exchanged for substrates by AceI. In addition, is involved in resistance to the synthetic biocide chlorhexidine, a widely used antiseptic and disinfectant in both hospital and community settings. Interacts directly with chlorhexidine and mediates its efflux via an energy-dependent mechanism. The sequence is that of Short-chain diamines transporter from Acinetobacter baumannii (strain ATCC 17978 / DSM 105126 / CIP 53.77 / LMG 1025 / NCDC KC755 / 5377).